The following is a 200-amino-acid chain: Adenylyl-sulfate kinase (200 aa).

35–42 is a binding site for ATP; the sequence is GLPASGKS. Catalysis depends on Ser109, which acts as the Phosphoserine intermediate.

Belongs to the APS kinase family.

The enzyme catalyses adenosine 5'-phosphosulfate + ATP = 3'-phosphoadenylyl sulfate + ADP + H(+). The protein operates within sulfur metabolism; hydrogen sulfide biosynthesis; sulfite from sulfate: step 2/3. Functionally, catalyzes the synthesis of activated sulfate. The chain is Adenylyl-sulfate kinase from Thermodesulfovibrio yellowstonii (strain ATCC 51303 / DSM 11347 / YP87).